A 447-amino-acid chain; its full sequence is Probable glycine dehydrogenase (decarboxylating) subunit 1 (447 aa).

It belongs to the GcvP family. N-terminal subunit subfamily. In terms of assembly, the glycine cleavage system is composed of four proteins: P, T, L and H. In this organism, the P 'protein' is a heterodimer of two subunits.

It carries out the reaction N(6)-[(R)-lipoyl]-L-lysyl-[glycine-cleavage complex H protein] + glycine + H(+) = N(6)-[(R)-S(8)-aminomethyldihydrolipoyl]-L-lysyl-[glycine-cleavage complex H protein] + CO2. Its function is as follows. The glycine cleavage system catalyzes the degradation of glycine. The P protein binds the alpha-amino group of glycine through its pyridoxal phosphate cofactor; CO(2) is released and the remaining methylamine moiety is then transferred to the lipoamide cofactor of the H protein. In Bacillus cereus (strain AH187), this protein is Probable glycine dehydrogenase (decarboxylating) subunit 1.